We begin with the raw amino-acid sequence, 347 residues long: Haptoglobin (347 aa).

The N-terminal stretch at methionine 1–alanine 18 is a signal peptide. Residues aspartate 31 to alanine 88 enclose the Sushi domain. Cystine bridges form between cysteine 52–cysteine 86, cysteine 90–cysteine 207, cysteine 250–cysteine 281, and cysteine 292–cysteine 322. One can recognise a Peptidase S1 domain in the interval isoleucine 103–alanine 345. Asparagine 148, asparagine 182, and asparagine 264 each carry an N-linked (GlcNAc...) asparagine glycan. An interaction with CD163 region spans residues valine 259–asparagine 264.

It belongs to the peptidase S1 family. Tetramer of two alpha and two beta chains; disulfide-linked. The hemoglobin/haptoglobin complex is composed of a haptoglobin dimer bound to two hemoglobin alpha-beta dimers. Interacts with CD163. Interacts with ERGIC3. In terms of tissue distribution, expressed by the liver and secreted in plasma.

It localises to the secreted. As a result of hemolysis, hemoglobin is found to accumulate in the kidney and is secreted in the urine. Haptoglobin captures, and combines with free plasma hemoglobin to allow hepatic recycling of heme iron and to prevent kidney damage. Haptoglobin also acts as an antioxidant, has antibacterial activity and plays a role in modulating many aspects of the acute phase response. Hemoglobin/haptoglobin complexes are rapidly cleared by the macrophage CD163 scavenger receptor expressed on the surface of liver Kupfer cells through an endocytic lysosomal degradation pathway. This Mus caroli (Ryukyu mouse) protein is Haptoglobin (Hp).